The chain runs to 405 residues: Acetate kinase (405 aa).

Residue Asn-7 participates in Mg(2+) binding. Position 14 (Lys-14) interacts with ATP. Arg-98 serves as a coordination point for substrate. Asp-156 functions as the Proton donor/acceptor in the catalytic mechanism. ATP-binding positions include 215–219, 290–292, and 338–342; these read HLGNG, DLR, and GVGEN. Glu-391 provides a ligand contact to Mg(2+).

Belongs to the acetokinase family. In terms of assembly, homodimer. The cofactor is Mg(2+). Mn(2+) serves as cofactor.

The protein resides in the cytoplasm. The catalysed reaction is acetate + ATP = acetyl phosphate + ADP. It participates in metabolic intermediate biosynthesis; acetyl-CoA biosynthesis; acetyl-CoA from acetate: step 1/2. Catalyzes the formation of acetyl phosphate from acetate and ATP. Can also catalyze the reverse reaction. The chain is Acetate kinase from Gloeobacter violaceus (strain ATCC 29082 / PCC 7421).